Consider the following 614-residue polypeptide: Chaperone protein DnaK (614 aa).

Residue T176 is modified to Phosphothreonine; by autocatalysis. Positions 576–614 are disordered; the sequence is YQQQQSQGGEAGAANGDASKKDDNTVDGDFHEVHDDDKK. The span at 577 to 589 shows a compositional bias: low complexity; the sequence is QQQQSQGGEAGAA. Over residues 593 to 614 the composition is skewed to basic and acidic residues; the sequence is ASKKDDNTVDGDFHEVHDDDKK.

The protein belongs to the heat shock protein 70 family.

Functionally, acts as a chaperone. The chain is Chaperone protein DnaK from Fructilactobacillus sanfranciscensis (Lactobacillus sanfranciscensis).